The chain runs to 242 residues: tRNA pseudouridine synthase A (242 aa).

Catalysis depends on aspartate 51, which acts as the Nucleophile. Tyrosine 107 contacts substrate.

It belongs to the tRNA pseudouridine synthase TruA family. As to quaternary structure, homodimer.

It carries out the reaction uridine(38/39/40) in tRNA = pseudouridine(38/39/40) in tRNA. In terms of biological role, formation of pseudouridine at positions 38, 39 and 40 in the anticodon stem and loop of transfer RNAs. This chain is tRNA pseudouridine synthase A, found in Helicobacter pylori (strain ATCC 700392 / 26695) (Campylobacter pylori).